A 99-amino-acid polypeptide reads, in one-letter code: Acylphosphatase (99 aa).

Residues 5–97 enclose the Acylphosphatase-like domain; it reads VRQIVIRGRV…RPGERFSQLP (93 aa). Residues arginine 20 and asparagine 38 contribute to the active site.

It belongs to the acylphosphatase family.

The enzyme catalyses an acyl phosphate + H2O = a carboxylate + phosphate + H(+). In Nitrobacter hamburgensis (strain DSM 10229 / NCIMB 13809 / X14), this protein is Acylphosphatase (acyP).